A 225-amino-acid chain; its full sequence is Holliday junction branch migration complex subunit RuvA (225 aa).

Positions 1–71 (MISWINGDLV…EDSDLLFGFT (71 aa)) are domain I. A domain II region spans residues 72-150 (SNEQKNFFIE…SEILSEEEKS (79 aa)). The flexible linker stretch occupies residues 151–161 (KGELEIKDPEI). The tract at residues 161–225 (INKMIEDLQL…LDEDSSNIAR (65 aa)) is domain III.

It belongs to the RuvA family. As to quaternary structure, homotetramer. Forms an RuvA(8)-RuvB(12)-Holliday junction (HJ) complex. HJ DNA is sandwiched between 2 RuvA tetramers; dsDNA enters through RuvA and exits via RuvB. An RuvB hexamer assembles on each DNA strand where it exits the tetramer. Each RuvB hexamer is contacted by two RuvA subunits (via domain III) on 2 adjacent RuvB subunits; this complex drives branch migration. In the full resolvosome a probable DNA-RuvA(4)-RuvB(12)-RuvC(2) complex forms which resolves the HJ.

Its subcellular location is the cytoplasm. Its function is as follows. The RuvA-RuvB-RuvC complex processes Holliday junction (HJ) DNA during genetic recombination and DNA repair, while the RuvA-RuvB complex plays an important role in the rescue of blocked DNA replication forks via replication fork reversal (RFR). RuvA specifically binds to HJ cruciform DNA, conferring on it an open structure. The RuvB hexamer acts as an ATP-dependent pump, pulling dsDNA into and through the RuvAB complex. HJ branch migration allows RuvC to scan DNA until it finds its consensus sequence, where it cleaves and resolves the cruciform DNA. The sequence is that of Holliday junction branch migration complex subunit RuvA from Prochlorococcus marinus (strain MIT 9301).